Reading from the N-terminus, the 267-residue chain is Placental prolactin-related protein 2 (267 aa).

N-linked (GlcNAc...) asparagine glycosylation is found at Asn99 and Asn121. 2 disulfide bridges follow: Cys126–Cys244 and Cys261–Cys267.

It belongs to the somatotropin/prolactin family.

The protein localises to the secreted. Placental prolactin-related proteins may play a specific role during gestation. The polypeptide is Placental prolactin-related protein 2 (PRP2) (Bos taurus (Bovine)).